Reading from the N-terminus, the 162-residue chain is Peptide deformylase-like (162 aa).

Belongs to the polypeptide deformylase family.

This Staphylococcus aureus (strain MRSA252) protein is Peptide deformylase-like.